An 860-amino-acid polypeptide reads, in one-letter code: Pentatricopeptide repeat-containing protein At2g40720 (860 aa).

PPR repeat units lie at residues 59–93 (SVFT…GWRY), 94–124 (DPFI…WSQS), 132–166 (DVTV…GVRP), 167–203 (DAFS…SLDT), 204–234 (DSFL…IEDK), 236–270 (NVVL…SVKL), 271–305 (VSTS…GLHN), 306–340 (DPYV…RLEI), 341–371 (WNAM…SVLP), 372–406 (DSFT…PIQS), 407–437 (TSTI…MEEK), 438–472 (DMVA…DDSL), 475–509 (DSDI…GLVL), 510–540 (NVFV…MSTE), 541–575 (NMVA…GIFP), 576–610 (DSVS…GIPS), 611–641 (DTHL…MQHK), 642–676 (SLIT…GESP), 677–707 (DDVT…MKQD), and 713–743 (NMEH…MPIE). The interval 748-823 (IWLCLLSASR…QPGCSWIEVS (76 aa)) is type E motif. Residues 824–854 (DRTNVFFSGGSSSPMKAEIFNVLNRLKSNMV) are type E(+) motif.

The protein belongs to the PPR family. PCMP-E subfamily.

The chain is Pentatricopeptide repeat-containing protein At2g40720 (PCMP-E26) from Arabidopsis thaliana (Mouse-ear cress).